A 744-amino-acid polypeptide reads, in one-letter code: Glucosamine inositolphosphorylceramide transferase 1 (744 aa).

Transmembrane regions (helical) follow at residues 31 to 51 (FLVAAAAGAALVGGVYFWLVV), 378 to 398 (SLFGYMGFLVAVALVTFVGFV), and 460 to 480 (LFFCVIALIGIVNVCIAVHFL). Residues Asn-534, 558–563 (NSLNNR), 579–581 (DDD), Arg-609, and 665–669 (FNCED) contribute to the substrate site. Mn(2+) is bound at residue Asp-581. A disulfide bond links Cys-667 and Cys-718. Asp-669 is an active-site residue.

Belongs to the glycosyltransferase 64 family. Requires Mn(2+) as cofactor. As to expression, highly expressed in almost all tissues.

Its subcellular location is the membrane. The protein operates within sphingolipid metabolism. Essential protein. Glycosyltransferase that mediates the glycosylation of glycosylinositol phosphorylceramides (GIPCs), the major sphingolipids in the plasma membrane; acts as a HexN(Ac)-specific GIPC sugar transferase. Responsible for the glycosylation of a subgroup of GIPCs found in seeds and pollen that contain GlcNAc and GlcN (GlcN(Ac)). Maybe involved in the maintenance of cell-cell adhesion. This Oryza sativa subsp. japonica (Rice) protein is Glucosamine inositolphosphorylceramide transferase 1.